The chain runs to 214 residues: tRNA (guanine-N(7)-)-methyltransferase (214 aa).

S-adenosyl-L-methionine contacts are provided by E44, E69, D96, and D118. D118 is a catalytic residue. Substrate is bound by residues K122, D154, and T191–E194.

It belongs to the class I-like SAM-binding methyltransferase superfamily. TrmB family.

It catalyses the reaction guanosine(46) in tRNA + S-adenosyl-L-methionine = N(7)-methylguanosine(46) in tRNA + S-adenosyl-L-homocysteine. The protein operates within tRNA modification; N(7)-methylguanine-tRNA biosynthesis. In terms of biological role, catalyzes the formation of N(7)-methylguanine at position 46 (m7G46) in tRNA. The protein is tRNA (guanine-N(7)-)-methyltransferase of Listeria monocytogenes serotype 4b (strain F2365).